Here is a 417-residue protein sequence, read N- to C-terminus: Inactive GDSL esterase/lipase-like protein 25 (417 aa).

The signal sequence occupies residues 1–50 (MLLIPSFTANSNEPPPSKLSLSDLSMAILKSHFFLLFPLLLLHFHTVSFA). N-linked (GlcNAc...) asparagine glycans are attached at residues N160, N308, and N311. H331 is an active-site residue.

This sequence belongs to the 'GDSL' lipolytic enzyme family. Interacts with the PYK10 complex and TGG2, but not with TGG1 or PEN2. In terms of tissue distribution, expressed throughout the seedling, rosette leaves, roots, inflorescence and imbibed seed, but not in pollen.

The protein resides in the vacuole. Its subcellular location is the endoplasmic reticulum. Its function is as follows. Involved in organization of the endomembrane system and is required for endoplasmic reticulum morphology and organelle distribution. May act by inhibiting the formation of PYK10 complex by binding to GLL23 and exporting it from the ER. Required for proper subcellular localization of myrosinase TGG2. Has no lipase or esterase activity. This is Inactive GDSL esterase/lipase-like protein 25 (MVP1) from Arabidopsis thaliana (Mouse-ear cress).